A 265-amino-acid polypeptide reads, in one-letter code: Proteasome subunit alpha (265 aa).

The segment at 236-265 (EKDSKGSKGAQNPKGARDSKNSKSYGESTD) is disordered.

Belongs to the peptidase T1A family. In terms of assembly, the 20S proteasome core is composed of 14 alpha and 14 beta subunits that assemble into four stacked heptameric rings, resulting in a barrel-shaped structure. The two inner rings, each composed of seven catalytic beta subunits, are sandwiched by two outer rings, each composed of seven alpha subunits. The catalytic chamber with the active sites is on the inside of the barrel. Has a gated structure, the ends of the cylinder being occluded by the N-termini of the alpha-subunits. Is capped by the proteasome-associated ATPase, ARC.

Its subcellular location is the cytoplasm. It participates in protein degradation; proteasomal Pup-dependent pathway. With respect to regulation, the formation of the proteasomal ATPase ARC-20S proteasome complex, likely via the docking of the C-termini of ARC into the intersubunit pockets in the alpha-rings, may trigger opening of the gate for substrate entry. Interconversion between the open-gate and close-gate conformations leads to a dynamic regulation of the 20S proteasome proteolysis activity. In terms of biological role, component of the proteasome core, a large protease complex with broad specificity involved in protein degradation. The polypeptide is Proteasome subunit alpha (Mycobacterium leprae (strain Br4923)).